The primary structure comprises 169 residues: Cell division inhibitor SulA (169 aa).

Positions A106–Y112 are ftsZ binding. The tract at residues K162 to H169 is lon protease binding.

Belongs to the SulA family. Interacts with FtsZ. Post-translationally, is rapidly cleaved and degraded by the Lon protease once DNA damage is repaired.

In terms of biological role, component of the SOS system and an inhibitor of cell division. Accumulation of SulA causes rapid cessation of cell division and the appearance of long, non-septate filaments. In the presence of GTP, binds a polymerization-competent form of FtsZ in a 1:1 ratio, thus inhibiting FtsZ polymerization and therefore preventing it from participating in the assembly of the Z ring. This mechanism prevents the premature segregation of damaged DNA to daughter cells during cell division. In Escherichia coli O81 (strain ED1a), this protein is Cell division inhibitor SulA.